The sequence spans 2944 residues: Collagen alpha-1(VII) chain (2944 aa).

Positions 1 to 24 (MRLRLLVAALCAAEILMGAPEVWA) are cleaved as a signal peptide. The segment at 18-1254 (GAPEVWAQPR…TGPCAVHCPK (1237 aa)) is nonhelical region (NC1). Residues 39 to 212 (DIVFLLDGSS…SILRTLLPLI (174 aa)) enclose the VWFA 1 domain. 9 Fibronectin type-III domains span residues 235–330 (GPRD…TAKE), 331–417 (GLEL…TASS), 418–508 (VEQT…LEQL), 511–598 (PVMN…DPEA), 601–688 (VVPG…DPLG), 689–776 (PVRR…APEP), 779–867 (SVSK…PPAT), 870–957 (LLET…EPSH), and 959–1053 (PSTE…SHGP). N-linked (GlcNAc...) asparagine glycosylation is present at Asn338. N-linked (GlcNAc...) asparagine glycosylation is present at Asn787. The 176-residue stretch at 1055 to 1230 (DVVFLLHATR…PGLDRAVSDL (176 aa)) folds into the VWFA 2 domain. Asn1110 carries N-linked (GlcNAc...) asparagine glycosylation. The short motif at 1171-1173 (RGD) is the Cell attachment site element. Residues 1255–1475 (GQKGEPGVTG…GLRGAPGMTG (221 aa)) form an interrupted collagenous region region. Residues 1255–2775 (GQKGEPGVTG…GPRGEKGEAA (1521 aa)) are triple-helical region. 2 disordered regions span residues 1259-1934 (EPGV…GSLP) and 1960-2773 (SSGS…EKGE). The span at 1338–1352 (RGPQGPKGEPGEPGQ) shows a compositional bias: low complexity. Residues 1353–1363 (ITGGGGPGFPG) show a composition bias toward gly residues. Basic and acidic residues-rich tracts occupy residues 1397–1406 (KGDKGDRGER) and 1439–1448 (PGEKGEKGDC). Residues 1507-1518 (PGAAGHPGVEGP) are compositionally biased toward low complexity. Basic and acidic residues-rich tracts occupy residues 1527–1536 (RRGEKGEPGR), 1627–1639 (RGRD…KGDE), and 1666–1680 (VGEK…EDGR). Residues 1813-1822 (PPGPPGPPGV) show a composition bias toward pro residues. Basic and acidic residues-rich tracts occupy residues 1846–1855 (EDGRKGEKGD), 1862–1871 (EGPDGPKGER), and 1968–1984 (PERR…RGPP). The short motif at 2002–2004 (RGD) is the Cell attachment site element. Residues 2040-2049 (GRAGGSGEAG) are compositionally biased toward gly residues. A compositionally biased stretch (basic and acidic residues) spans 2050 to 2068 (RPGERGERGEKGERGDQGR). The Cell attachment site motif lies at 2063-2065 (RGD). Positions 2074-2083 (LPGPPGPPGP) are enriched in pro residues. Residues 2130–2140 (DVGEPGKRGHD) are compositionally biased toward basic and acidic residues. 4 positions are modified to 4-hydroxyproline: Pro2158, Pro2167, Pro2176, and Pro2179. Low complexity-rich tracts occupy residues 2182-2197 (PGLA…SGLK), 2226-2241 (SGLV…PGQV), 2279-2299 (PKGE…PPGA), and 2306-2317 (PGDLAGALLGEP). The span at 2319–2335 (AKGDRGLPGPRGEKGEA) shows a compositional bias: basic and acidic residues. The segment covering 2414-2427 (ERGLAGPPGREGAP) has biased composition (low complexity). 2 stretches are compositionally biased toward basic and acidic residues: residues 2462–2477 (RGER…DGHP) and 2525–2544 (AKGD…KGPR). Residues 2576-2594 (PKGEPGAAGIPGEPGAPGK) are compositionally biased toward low complexity. Positions 2601–2603 (RGD) match the Cell attachment site motif. The segment covering 2615–2636 (LKGEKGIKGTCGRDGERGDKGE) has biased composition (basic and acidic residues). 5-hydroxylysine is present on residues Lys2616 and Lys2622. A Cell attachment site motif is present at residues 2631-2633 (RGD). Pro2655, Pro2658, and Pro2664 each carry 4-hydroxyproline. Positions 2695-2704 (GPPGVGGFPG) are enriched in gly residues. Positions 2776–2944 (LTEDDIRDFV…GVHSQKTGAA (169 aa)) are nonhelical region (NC2). The BPTI/Kunitz inhibitor domain maps to 2879 to 2931 (CSLPLDEGSCTAYTLRWYHRAVPGGTACHPFVYGGCGGNANRFGTREACERRC). Disulfide bonds link Cys2879–Cys2931, Cys2888–Cys2914, and Cys2906–Cys2927.

As to quaternary structure, homotrimer. Interacts with MIA3/TANGO1; facilitating its loading into transport carriers and subsequent secretion. In terms of processing, prolines at the third position of the tripeptide repeating unit (G-X-Y) are hydroxylated in some or all of the chains.

It is found in the secreted. Its subcellular location is the extracellular space. It localises to the extracellular matrix. The protein resides in the basement membrane. Stratified squamous epithelial basement membrane protein that forms anchoring fibrils which may contribute to epithelial basement membrane organization and adherence by interacting with extracellular matrix (ECM) proteins such as type IV collagen. In Mus musculus (Mouse), this protein is Collagen alpha-1(VII) chain.